The primary structure comprises 494 residues: Arp2/3 complex-activating protein rickA (494 aa).

The tract at residues 312–494 (PLENNIPPPP…RNSQKPSFVR (183 aa)) is disordered. The span at 317-357 (IPPPPPPPPPLPDNNIPPPPPPPPPLPDNNIPPPPPPPPMA) shows a compositional bias: pro residues. A WH2 domain is found at 383–400 (DTSDLMREIAGPKKLKKV). Residues 421-454 (VNKPSGLESIFARRVAIEMSDSSSSESDSGNWSD) form a central and acidic domains region. A compositionally biased stretch (low complexity) spans 440 to 456 (SDSSSSESDSGNWSDVS). The segment covering 477 to 494 (THAQKINNRNSQKPSFVR) has biased composition (polar residues).

It localises to the cell surface. Recruits and activates the Arp2/3 complex, which in turn leads to actin polymerization, promoting Rickettsia motility during infection. The sequence is that of Arp2/3 complex-activating protein rickA (rickA) from Rickettsia rickettsii.